We begin with the raw amino-acid sequence, 847 residues long: Putative membrane protein SCO5905 (847 aa).

Helical transmembrane passes span 18 to 38 (AVVVAFWVLIAGLLAGVAPAL), 187 to 207 (GGDKVLLLATVVLVLIILLAI), 215 to 235 (LVPLLAVGVAMRVAETLGAIL), 248 to 268 (ASIMTVLLFGVGTDYALIITA), 302 to 322 (IVLAMFALLVAVSPALHGFGP), 326 to 346 (LGVAVMALVAFTFIPALVLLL), 381 to 401 (VKVASAVIALLVVLSAGLLGY), 539 to 559 (DTTLIVLLVLAIVTVVLVLLL), 562 to 582 (LLAPLYLVATLLLSFLATLGA), 600 to 620 (VTAYIFVFLVALGVDYNIFIM), 643 to 663 (TGGVISSAGLILAATFAVLMT), and 672 to 692 (FGFAMACGILLDTFLIRPLLV). Residues 708–729 (RPGTPQTPSTPTSEPPSADAPA) are disordered. 3 consecutive transmembrane segments (helical) span residues 744–764 (FTWIAIIEACTWAGLLAGMYL), 778–798 (FGTLHGAAFIVYVSLTVLVAI), and 808–828 (TIFALLAAVPPFMTIAFEIWA).

It belongs to the resistance-nodulation-cell division (RND) (TC 2.A.6) family. MmpL subfamily.

Its subcellular location is the cell membrane. This is Putative membrane protein SCO5905 from Streptomyces coelicolor (strain ATCC BAA-471 / A3(2) / M145).